The chain runs to 731 residues: MDGNDAPNAGQCPVMHGHAAGTGMRNHHWWPNQINLKVLHQHSSKSDPMGAQFNYAEAFKSLDLDALKADLTALMTDSQDWWPADYGHYGPLFIRMTWHAAGTYRTADGRGGGSTGNQRFAPLNSWPDNGNLDKARRLLWPIKKKYGDKISWADLLILTGNVALESMGFKTFGFAGGRPDIWEPEEDIYWGSEGEWLAPSDTANSRYSGARDLENPLAAVQMGLIYVNPEGPDGNPDIVASGHDVIETFGRMAMDEAETVALVAGGHTFGKAHGNGPASAVGPEPEAAPIEAMGLGWLSTHGSGKGADAITSGIEGAWKPHPTTWDMGYFKVLFKYDWELTKSPAGANIWLATNVEDEDMVEDAFDPSKKHRPMMTTADLSLRYHPKLLPHAKRFAEDPAAFADAFARAWFKLTHRDMGPRARYLGKEVPAEELIWQDPIPAGTQIDADDAAALKAQILASGLSVSDMVSTAWASASTFRGSDMRGGANGARIRLAPQKDWEVNEPAKLARVLGVLEGIQAGFSSGGKSVSMADLIVLAGCAGVEQAAKAGGHQIEVPFTSGRGDASAEQTDAESFAVMEPVMDGFRNYQARELSTSPEEMLVDRAQLLGLSAPEMTVLVAGLRVLGANHGGSAHGVLTNRPGVLSSDFLTNLLDMGTEWKPSGKGVYEGRDRASGAARWTATRVDLVFGSNSQLRALAERYAQDDAEASFVADFVAAWVKVMNADRFDLT.

Positions 98–226 (WHAAGTYRTA…LAAVQMGLIY (129 aa)) form a cross-link, tryptophyl-tyrosyl-methioninium (Trp-Tyr) (with M-252). H99 serves as the catalytic Proton acceptor. A cross-link (tryptophyl-tyrosyl-methioninium (Tyr-Met) (with W-98)) is located at residues 226–252 (YVNPEGPDGNPDIVASGHDVIETFGRM). A heme b-binding site is contributed by H267.

This sequence belongs to the peroxidase family. Peroxidase/catalase subfamily. As to quaternary structure, homodimer or homotetramer. The cofactor is heme b. In terms of processing, formation of the three residue Trp-Tyr-Met cross-link is important for the catalase, but not the peroxidase activity of the enzyme.

It catalyses the reaction H2O2 + AH2 = A + 2 H2O. The enzyme catalyses 2 H2O2 = O2 + 2 H2O. Its function is as follows. Bifunctional enzyme with both catalase and broad-spectrum peroxidase activity. In Ruegeria pomeroyi (strain ATCC 700808 / DSM 15171 / DSS-3) (Silicibacter pomeroyi), this protein is Catalase-peroxidase.